The chain runs to 341 residues: L-threonine 3-dehydrogenase (341 aa).

Cys38 contacts Zn(2+). Catalysis depends on charge relay system residues Thr40 and His43. Residues His63, Glu64, Cys93, Cys96, Cys99, and Cys107 each contribute to the Zn(2+) site. NAD(+)-binding positions include Ile175, Asp195, Arg200, 262–264, and 286–287; these read LGI and IY.

It belongs to the zinc-containing alcohol dehydrogenase family. In terms of assembly, homotetramer. The cofactor is Zn(2+).

Its subcellular location is the cytoplasm. It catalyses the reaction L-threonine + NAD(+) = (2S)-2-amino-3-oxobutanoate + NADH + H(+). The protein operates within amino-acid degradation; L-threonine degradation via oxydo-reductase pathway; glycine from L-threonine: step 1/2. Functionally, catalyzes the NAD(+)-dependent oxidation of L-threonine to 2-amino-3-ketobutyrate. In Escherichia coli O17:K52:H18 (strain UMN026 / ExPEC), this protein is L-threonine 3-dehydrogenase.